We begin with the raw amino-acid sequence, 93 residues long: Consomatin G1 (93 aa).

An N-terminal signal peptide occupies residues 1–22 (MQTAYWVMLMMMVCITAPLPEG). The propeptide occupies 23–69 (GKPNSGIRGLVPNDLTPQHTLRSLISRRQTDVLLDATLLTTPAPEQR). A disulfide bridge links C72 with C77. The residue at position 74 (W74) is a D-tryptophan. Residues 79-93 (PRPYPWRRRDLNGKR) constitute a propeptide that is removed on maturation.

This sequence belongs to the conotoxin C superfamily. Consomatin family. Expressed by the venom duct.

It localises to the secreted. Its function is as follows. Potently activates human somatostatin receptors (SSTR) with a specific activation of SSTR2 (EC(50)=2.6 nM). This Conus geographus (Geography cone) protein is Consomatin G1.